A 191-amino-acid chain; its full sequence is Signal peptidase IB (191 aa).

Residues 1 to 7 (MKKELLE) lie on the Cytoplasmic side of the membrane. The helical transmembrane segment at 8-28 (WIISIAVAFVILFIVGKFIVT) threads the bilayer. The Extracellular portion of the chain corresponds to 29 to 191 (PYTIKGESMD…YNFNPENTKN (163 aa)). Active-site residues include Ser36 and Lys77.

This sequence belongs to the peptidase S26 family.

The protein resides in the cell membrane. The catalysed reaction is Cleavage of hydrophobic, N-terminal signal or leader sequences from secreted and periplasmic proteins.. In terms of biological role, essential for cell viability. The polypeptide is Signal peptidase IB (spsB) (Staphylococcus aureus (strain MRSA252)).